Here is a 418-residue protein sequence, read N- to C-terminus: GTPase Obg (418 aa).

The 156-residue stretch at 1–156 (MKFIDEITLN…KKLTLVLKVL (156 aa)) folds into the Obg domain. One can recognise an OBG-type G domain in the interval 157–324 (ADVGFVGKPS…LKEALWQSVK (168 aa)). Residues 163-170 (GKPSAGKS), 188-192 (FTTLV), 209-212 (DLPG), 278-281 (NKKD), and 305-307 (SAL) each bind GTP. Mg(2+)-binding residues include Ser-170 and Thr-190. The OCT domain maps to 339-417 (VFINFEADFN…IYDYEFVWGN (79 aa)).

Belongs to the TRAFAC class OBG-HflX-like GTPase superfamily. OBG GTPase family. Monomer. Requires Mg(2+) as cofactor.

The protein localises to the cytoplasm. In terms of biological role, an essential GTPase which binds GTP, GDP and possibly (p)ppGpp with moderate affinity, with high nucleotide exchange rates and a fairly low GTP hydrolysis rate. Plays a role in control of the cell cycle, stress response, ribosome biogenesis and in those bacteria that undergo differentiation, in morphogenesis control. This Mycoplasmopsis pulmonis (strain UAB CTIP) (Mycoplasma pulmonis) protein is GTPase Obg.